The following is a 630-amino-acid chain: Cyclin-T1-2 (630 aa).

Residues 288 to 297 (QSSLSVSSSS) are compositionally biased toward low complexity. Disordered regions lie at residues 288–313 (QSSLSVSSSSPEIGDPNDHLQVDSSQ) and 410–439 (RSGDKTKLCSEGGSSLTDVDSKSTQSVEPP). Positions 421 to 439 (GGSSLTDVDSKSTQSVEPP) are enriched in polar residues.

This sequence belongs to the cyclin family. Cyclin T subfamily.

This chain is Cyclin-T1-2 (CYCT1_2), found in Oryza sativa subsp. japonica (Rice).